The primary structure comprises 520 residues: Ubiquitin carboxyl-terminal hydrolase 3 (520 aa).

An N-acetylmethionine modification is found at Met-1. The UBP-type zinc finger occupies 1–121; the sequence is MECPHLSSSV…QKVREHLQNL (121 aa). Zn(2+)-binding residues include Cys-3, His-5, Cys-29, Cys-32, Cys-41, Cys-44, Cys-49, His-56, His-60, His-82, Cys-95, and Cys-98. In terms of domain architecture, USP spans 159-511; the sequence is TGLRNLGNTC…KAYILFYVER (353 aa). Cys-168 (nucleophile) is an active-site residue. Residue His-471 is the Proton acceptor of the active site.

This sequence belongs to the peptidase C19 family. USP3 subfamily. Interacts (via UBP-type domain) with H2A; the interaction is less efficient than with monoubiquitinated H2A.

The protein resides in the nucleus. It localises to the cytoplasm. The enzyme catalyses Thiol-dependent hydrolysis of ester, thioester, amide, peptide and isopeptide bonds formed by the C-terminal Gly of ubiquitin (a 76-residue protein attached to proteins as an intracellular targeting signal).. Functionally, deubiquitinase that plays a role in several cellular processes including transcriptional regulation, cell cycle progression or innate immunity. In response to DNA damage, deubiquitinates monoubiquitinated target proteins such as histone H2A and H2AX and thereby counteracts RNF168- and RNF8-mediated ubiquitination. In turn, participates in the recruitment of DNA damage repair factors to DNA break sites. Required for proper progression through S phase and subsequent mitotic entry. Acts as a positive regulator of TP53 by deubiquitinating and stabilizing it to promote normal cell proliferation and transformation. Participates in establishing tolerance innate immune memory through non-transcriptional feedback. Mechanistically, negatively regulates TLR-induced NF-kappa-B signaling by targeting and removing the 'Lys-63'-linked polyubiquitin chains on MYD88. Negatively regulates the activation of type I interferon signaling by mediating 'Lys-63'-linked polyubiquitin chains on RIGI and IFIH1. Also deubiquinates ASC/PYCARD, the central adapter mediating the assembly and activation of most inflammasomes, and thereby promotes inflammasome activation. This chain is Ubiquitin carboxyl-terminal hydrolase 3 (Usp3), found in Mus musculus (Mouse).